The sequence spans 308 residues: Carbamate kinase (308 aa).

Belongs to the carbamate kinase family.

Its subcellular location is the cytoplasm. It carries out the reaction hydrogencarbonate + NH4(+) + ATP = carbamoyl phosphate + ADP + H2O + H(+). In Synechocystis sp. (strain ATCC 27184 / PCC 6803 / Kazusa), this protein is Carbamate kinase.